The sequence spans 284 residues: Para-Rep C3 (284 aa).

One can recognise a CRESS-DNA virus Rep endonuclease domain in the interval 3 to 98 (TVQSTCWVFT…IEGPWEYGKY (96 aa)). The short motif at 10–13 (VFTL) is the RCR-1 element. Positions 36 and 42 each coordinate a divalent metal cation. The RCR-2 motif lies at 42 to 44 (HLQ). A Nuclear localization signal motif is present at residues 51–71 (AQQSLGQMKAIIPGAHFEKMR). Tyr81 serves as the catalytic For DNA cleavage activity. Residues 81–84 (YAMK) carry the RCR-3 motif. Asp86 contacts a divalent metal cation. The Nuclear localization signal signature appears at 98–104 (YIKKGSH). 174–182 (GPKGGEGKS) is an ATP binding site.

It belongs to the nanoviridea/circoviridae replication-associated protein family. As to quaternary structure, homooligomer (Potential). Rep binds to repeated DNA motifs (iterons). Mg(2+) is required as a cofactor. Requires Mn(2+) as cofactor.

The protein localises to the host nucleus. The catalysed reaction is ATP + H2O = ADP + phosphate + H(+). In terms of biological role, initiates and terminates the replication only of its own subviral DNA molecule. The closed circular ssDNA genome is first converted to a superhelical dsDNA. Rep binds a specific hairpin at the genome origin of replication. Introduces an endonucleolytic nick within the intergenic region of the genome, thereby initiating the rolling circle replication (RCR). Following cleavage, binds covalently to the 5'-phosphate of DNA as a tyrosyl ester. The cleavage gives rise to a free 3'-OH that serves as a primer for the cellular DNA polymerase. The polymerase synthesizes the (+) strand DNA by rolling circle mechanism. After one round of replication, a Rep-catalyzed nucleotidyl transfer reaction releases a circular single-stranded virus genome, thereby terminating the replication. Displays origin-specific DNA cleavage, nucleotidyl transferase, ATPase and helicase activities. This is Para-Rep C3 (C3) from Milk vetch dwarf C3 alphasatellite (MVDC3A).